The primary structure comprises 211 residues: MQSALFLAVQHECGPMDKGAGTGPKNEEKREKMKRTLLKDWKSRLSYFLQNSSSPGKPKTGKKSKQQTFIKPSPEEAQLWSEAFDELLASKYGLAAFRAFLKSEFCEENIEFWLACEDFKKTKSPQKLSSKAKKIYTDFIEKEAPKEINIDFQTKSLIAQNIQEATSGCFTTAQKRVYSLMENNSYPRFLESEFYQDLCKKPQITTEPHAT.

Disordered regions lie at residues 14–33 and 49–71; these read GPMD…REKM and LQNS…TFIK. The necessary for membrane association stretch occupies residues 32 to 66; sequence KMKRTLLKDWKSRLSYFLQNSSSPGKPKTGKKSKQ. Positions 79 to 116 are necessary to inhibit protein synthesis; that stretch reads LWSEAFDELLASKYGLAAFRAFLKSEFCEENIEFWLAC. Residues 83–199 form the RGS domain; that stretch reads AFDELLASKY…LESEFYQDLC (117 aa).

Interacts with GNAQ. Does not interact with GNAI1 and GNAI3. Interacts with EIF2B5. Interacts with PRKG1 (isoform alpha). Phosphorylated by protein kinase C. Phosphorylation by PRKG1 leads to activation of RGS2 activity.

It is found in the cell membrane. It localises to the cytoplasm. The protein resides in the nucleus. Its subcellular location is the nucleolus. Regulates G protein-coupled receptor signaling cascades. Inhibits signal transduction by increasing the GTPase activity of G protein alpha subunits, thereby driving them into their inactive GDP-bound form. It is involved in the negative regulation of the angiotensin-activated signaling pathway. Plays a role in the regulation of blood pressure in response to signaling via G protein-coupled receptors and GNAQ. Plays a role in regulating the constriction and relaxation of vascular smooth muscle. Binds EIF2B5 and blocks its activity, thereby inhibiting the translation of mRNA into protein. The chain is Regulator of G-protein signaling 2 (RGS2) from Bos taurus (Bovine).